Here is a 397-residue protein sequence, read N- to C-terminus: 2-oxoglutarate and iron-dependent oxygenase domain-containing protein ICU11 (397 aa).

Residues 1–56 (MCNQTPLRSMALDSSGKQPEQQQQQQPRASSGNGEARLKLRRTPNEEHEPENYEDL) are disordered. Residues 18–27 (QPEQQQQQQP) show a composition bias toward low complexity. The region spanning 238 to 339 (SLDSHHGYIV…RANLILWCRS (102 aa)) is the Fe2OG dioxygenase domain. Residues His-260, Asp-262, and His-320 each coordinate Fe cation. Arg-330 is a 2-oxoglutarate binding site.

Requires Fe(2+) as cofactor. L-ascorbate is required as a cofactor. In terms of tissue distribution, expressed in roots, cotyledons, rosette leaves, cauline leaves and inflorescences.

It localises to the nucleus. Its subcellular location is the nucleoplasm. Its function is as follows. Participates in the epigenetic repression of flowering genes in association with CP2. Functions in the repression of several members of the MADS-box transcription factors family, including SEP3, during vegetative development via histone modification. This Arabidopsis thaliana (Mouse-ear cress) protein is 2-oxoglutarate and iron-dependent oxygenase domain-containing protein ICU11.